A 301-amino-acid polypeptide reads, in one-letter code: UDP-N-acetylenolpyruvoylglucosamine reductase (301 aa).

Residues 29–195 (KIGGPADVFV…VEAIFSLTRG (167 aa)) form the FAD-binding PCMH-type domain. Residue R174 is part of the active site. S224 acts as the Proton donor in catalysis. E294 is a catalytic residue.

It belongs to the MurB family. The cofactor is FAD.

Its subcellular location is the cytoplasm. The catalysed reaction is UDP-N-acetyl-alpha-D-muramate + NADP(+) = UDP-N-acetyl-3-O-(1-carboxyvinyl)-alpha-D-glucosamine + NADPH + H(+). The protein operates within cell wall biogenesis; peptidoglycan biosynthesis. In terms of biological role, cell wall formation. The polypeptide is UDP-N-acetylenolpyruvoylglucosamine reductase (Halalkalibacterium halodurans (strain ATCC BAA-125 / DSM 18197 / FERM 7344 / JCM 9153 / C-125) (Bacillus halodurans)).